Here is a 48-residue protein sequence, read N- to C-terminus: Large ribosomal subunit protein bL32 (48 aa).

This sequence belongs to the bacterial ribosomal protein bL32 family.

This is Large ribosomal subunit protein bL32 from Helicobacter pylori (strain P12).